We begin with the raw amino-acid sequence, 173 residues long: MIRPAPWVGAGHRGRGGEAGACTESLGSESGDVGCDAAEIDQFFPPAPAAGGPDDAGAEPCIPDLAAAAAAGKRRRGGFPPPMPRASGPLFLRAERRGGRLILTEVRADERERRVVFRAERDGGRLRLRFANDGDGPEAAGGGGGAGGGGGELCQVAAGRRGVQVGAVMMGAI.

The segment at 1–31 (MIRPAPWVGAGHRGRGGEAGACTESLGSESG) is disordered.

It belongs to the fantastic four family.

Its function is as follows. Involved in starch metabolism in endosperm. Acts as a modifier of SUGARY1 (SU1), an isoamylase starch-debranching enzyme involved in amylopectin biosynthesis in endosperm. This chain is Protein SUGARY ENHANCER 1, found in Zea mays (Maize).